A 497-amino-acid polypeptide reads, in one-letter code: Beta-glucosidase 8 (497 aa).

The signal sequence occupies residues 1 to 22 (MKHFNLLSIILVIVLATSYIDA). Glutamine 42 contacts a beta-D-glucoside. The N-linked (GlcNAc...) asparagine glycan is linked to asparagine 65. A beta-D-glucoside is bound by residues histidine 139 and 184 to 185 (NE). Residue glutamate 185 is the Proton donor of the active site. Asparagine 202 carries N-linked (GlcNAc...) asparagine glycosylation. Tyrosine 319 contacts a beta-D-glucoside. The N-linked (GlcNAc...) asparagine glycan is linked to asparagine 354. A beta-D-glucoside-binding residues include glutamate 387, tryptophan 430, and phenylalanine 446. The active-site Nucleophile is glutamate 387. Asparagine 452, asparagine 474, and asparagine 490 each carry an N-linked (GlcNAc...) asparagine glycan.

This sequence belongs to the glycosyl hydrolase 1 family.

The catalysed reaction is Hydrolysis of terminal, non-reducing beta-D-glucosyl residues with release of beta-D-glucose.. This Arabidopsis thaliana (Mouse-ear cress) protein is Beta-glucosidase 8.